The primary structure comprises 334 residues: Syntaxin-18 (334 aa).

Over 1 to 308 (MAVDITLLFR…EDIREAIKNN (308 aa)) the chain is Cytoplasmic. Disordered stretches follow at residues 29–50 (GGAD…GDFS) and 166–225 (LSKL…GEDE). Composition is skewed to basic and acidic residues over residues 33 to 50 (GSRD…GDFS), 166 to 186 (LSKL…EKSS), and 193 to 207 (SEEK…EKPL). The t-SNARE coiled-coil homology domain maps to 242 to 304 (IGEMNSLFDE…KEGNEDIREA (63 aa)). A helical; Anchor for type IV membrane protein membrane pass occupies residues 309 to 329 (AGFRVWILFFLVMCSFSLLFL). The Vesicular portion of the chain corresponds to 330–334 (DWYDS).

Belongs to the syntaxin family. In terms of assembly, component of a SNARE complex consisting of STX18, USE1L, BNIP1/SEC20L, and SEC22B. RINT1/TIP20L and ZW10 are associated with the complex through interaction with BNIP1/SEC20L. Interacts directly with USE1L and BNIP1/SEC20L.

It is found in the endoplasmic reticulum membrane. It localises to the golgi apparatus membrane. In terms of biological role, syntaxin that may be involved in targeting and fusion of Golgi-derived retrograde transport vesicles with the ER. The protein is Syntaxin-18 (Stx18) of Rattus norvegicus (Rat).